Reading from the N-terminus, the 89-residue chain is Small ribosomal subunit protein uS15 (89 aa).

Belongs to the universal ribosomal protein uS15 family. In terms of assembly, part of the 30S ribosomal subunit. Forms a bridge to the 50S subunit in the 70S ribosome, contacting the 23S rRNA.

One of the primary rRNA binding proteins, it binds directly to 16S rRNA where it helps nucleate assembly of the platform of the 30S subunit by binding and bridging several RNA helices of the 16S rRNA. In terms of biological role, forms an intersubunit bridge (bridge B4) with the 23S rRNA of the 50S subunit in the ribosome. The protein is Small ribosomal subunit protein uS15 of Streptococcus equi subsp. zooepidemicus (strain H70).